A 988-amino-acid chain; its full sequence is Transposase for transposon Tn21 (988 aa).

A disordered region spans residues 672 to 696 (GDGTTSSSDEQNFRTASKAKSTGHI). A compositionally biased stretch (polar residues) spans 674–695 (GTTSSSDEQNFRTASKAKSTGH).

It belongs to the transposase 7 family.

In terms of biological role, required for transposition of transposon Tn21. The protein is Transposase for transposon Tn21 (tnpA) of Escherichia coli.